A 261-amino-acid polypeptide reads, in one-letter code: MRIALGIEYDGSGYFGWQRQAEVDSVQGQLEQALSKVANEPISLFCAGRTDAGVHATGQVVHFETNAIRNEGAWTLGVNANLPDNIAVRWAKEVDDTFHARFSATARRYRYVIYNHNFRPGILRHGVSHYHGDIDTDKMHVAAQALLGEQDFTSFRAIQCQSKTPFRNVHSVKVTRQGMYVIVDISANAFLHHMVRNIVGSLLEIGLGNQPLTWMADLLALKDRNQAAATAKPNGLYLVDVTYPEQYQLPKLALGPLFMLD.

Catalysis depends on Asp-51, which acts as the Nucleophile. A substrate-binding site is contributed by Tyr-109.

It belongs to the tRNA pseudouridine synthase TruA family. Homodimer.

The enzyme catalyses uridine(38/39/40) in tRNA = pseudouridine(38/39/40) in tRNA. Formation of pseudouridine at positions 38, 39 and 40 in the anticodon stem and loop of transfer RNAs. The protein is tRNA pseudouridine synthase A of Shewanella sp. (strain ANA-3).